An 859-amino-acid polypeptide reads, in one-letter code: Tripartite terminase subunit 1 (859 aa).

A C3H1-type zinc finger spans residues 231 to 259; the sequence is CCICLDELSVTANQGDTIYKRLGYSVCDH. Basic and acidic residues predominate over residues 512–525; sequence TRPRADKAGGRAED. The tract at residues 512-542 is disordered; it reads TRPRADKAGGRAEDGAGDCDDEGYPGAADAT. 782–789 is a binding site for ATP; it reads FESIFQCG.

It belongs to the herpesviridae TRM1 protein family. As to quaternary structure, associates with TRM2 and TRM3 to form the tripartite terminase complex. Interacts with portal protein.

It is found in the host nucleus. In terms of biological role, component of the molecular motor that translocates viral genomic DNA in empty capsid during DNA packaging. Forms a tripartite terminase complex together with TRM2 and TRM3 in the host cytoplasm. Once the complex reaches the host nucleus, it interacts with the capsid portal vertex. This portal forms a ring in which genomic DNA is translocated into the capsid. TRM1 carries an endonuclease activity that plays an important role for the cleavage of concatemeric viral DNA into unit length genomes. In Amazona oratrix (yellow-headed parrot), this protein is Tripartite terminase subunit 1.